The sequence spans 119 residues: Dihydroneopterin aldolase (119 aa).

Substrate is bound by residues E21, Y53, and 72-73 (IE). K99 acts as the Proton donor/acceptor in catalysis.

This sequence belongs to the DHNA family.

The catalysed reaction is 7,8-dihydroneopterin = 6-hydroxymethyl-7,8-dihydropterin + glycolaldehyde. It functions in the pathway cofactor biosynthesis; tetrahydrofolate biosynthesis; 2-amino-4-hydroxy-6-hydroxymethyl-7,8-dihydropteridine diphosphate from 7,8-dihydroneopterin triphosphate: step 3/4. Catalyzes the conversion of 7,8-dihydroneopterin to 6-hydroxymethyl-7,8-dihydropterin. In Streptococcus pyogenes serotype M6 (strain ATCC BAA-946 / MGAS10394), this protein is Dihydroneopterin aldolase (folB).